A 210-amino-acid chain; its full sequence is MTIGLVGRKVGMTRIFTEDGVSIPVTVIEVEANRVTQVKSVETDGYNAIQVTTGAKKASRVTKPEAGHFAKAGVEAGRGLWEFRLNNGETFTVGSELKVDLLADVKLVDVTGTSKGKGFAGTVKRWNFRTQDMTHGNSLSHRVPGSIGQNQTPGRVFKGKKMAGHMGAERVTTQNLELVRVDAERNLLLIKGAVPGATNGNVIVKPAVKA.

At Gln151 the chain carries N5-methylglutamine.

Belongs to the universal ribosomal protein uL3 family. As to quaternary structure, part of the 50S ribosomal subunit. Forms a cluster with proteins L14 and L19. In terms of processing, methylated by PrmB.

Functionally, one of the primary rRNA binding proteins, it binds directly near the 3'-end of the 23S rRNA, where it nucleates assembly of the 50S subunit. In Aeromonas hydrophila subsp. hydrophila (strain ATCC 7966 / DSM 30187 / BCRC 13018 / CCUG 14551 / JCM 1027 / KCTC 2358 / NCIMB 9240 / NCTC 8049), this protein is Large ribosomal subunit protein uL3.